The primary structure comprises 261 residues: Pyrroline-5-carboxylate reductase (261 aa).

It belongs to the pyrroline-5-carboxylate reductase family.

Its subcellular location is the cytoplasm. The enzyme catalyses L-proline + NADP(+) = (S)-1-pyrroline-5-carboxylate + NADPH + 2 H(+). It catalyses the reaction L-proline + NAD(+) = (S)-1-pyrroline-5-carboxylate + NADH + 2 H(+). It participates in amino-acid biosynthesis; L-proline biosynthesis; L-proline from L-glutamate 5-semialdehyde: step 1/1. Functionally, catalyzes the reduction of 1-pyrroline-5-carboxylate (PCA) to L-proline. The polypeptide is Pyrroline-5-carboxylate reductase (Thermus thermophilus (strain ATCC BAA-163 / DSM 7039 / HB27)).